The primary structure comprises 432 residues: Killer cell immunoglobulin-like receptor 3DL1 (432 aa).

The first 21 residues, 1 to 21 (MLLWFLSLVCSGFFLVQRMSA), serve as a signal peptide directing secretion. The Extracellular segment spans residues 22–335 (HVGSHDKPFL…ADTKTNNYKN (314 aa)). Ig-like C2-type domains are found at residues 42–100 (GQNV…HPQY), 135–202 (GGNV…NSYY), and 238–301 (GETM…FRNA). Residue N44 is glycosylated (N-linked (GlcNAc...) asparagine). A disulfide bridge links C49 with C95. N-linked (GlcNAc...) asparagine glycosylation occurs at N137. 2 disulfide bridges follow: C142–C195 and C245–C294. A glycan (N-linked (GlcNAc...) asparagine) is linked at N300. A helical transmembrane segment spans residues 336–356 (LHILTGLLVTMVLVVIIIFYS). Over 357–432 (CYFSKQNKSQ…DTIVYMEIMK (76 aa)) the chain is Cytoplasmic.

The protein belongs to the immunoglobulin superfamily.

The protein localises to the cell membrane. Functionally, receptor on natural killer (NK) cells. Inhibits the activity of NK cells thus preventing cell lysis. The sequence is that of Killer cell immunoglobulin-like receptor 3DL1 (Kir3dl1) from Mus musculus (Mouse).